The primary structure comprises 339 residues: Protein pelota homolog (339 aa).

The protein belongs to the eukaryotic release factor 1 family. Pelota subfamily. Monomer. A divalent metal cation serves as cofactor.

Its subcellular location is the cytoplasm. Its function is as follows. May function in recognizing stalled ribosomes, interact with stem-loop structures in stalled mRNA molecules, and effect endonucleolytic cleavage of the mRNA. May play a role in the release non-functional ribosomes and degradation of damaged mRNAs. Has endoribonuclease activity. The sequence is that of Protein pelota homolog from Picrophilus torridus (strain ATCC 700027 / DSM 9790 / JCM 10055 / NBRC 100828 / KAW 2/3).